A 192-amino-acid polypeptide reads, in one-letter code: Virion infectivity factor (192 aa).

The segment at 14 to 17 (DRMR) is interaction with host APOBEC3F; F1-box. The segment at 40–44 (YRHHF) is interaction with host APOBEC3G; G-box. The interaction with host APOBEC3F and APOBEC3G; FG-box stretch occupies residues 54–72 (EVHIPLETAELVITTYWGL). The interval 74–79 (PGEREW) is interaction with host APOBEC3F; F2-box. The interval 75–114 (GEREWHLGQGVSIEWRQGRYRTQIDPGLADQLIHIYYFDC) is RNA-binding. At Thr-96 the chain carries Phosphothreonine; by host MAP4K1. Zn(2+) is bound by residues His-108, Cys-114, Cys-133, and His-139. The HCCH motif motif lies at 108 to 139 (HIYYFDCFSESAIRKAILGHKISPRCNYQAGH). Residue Ser-144 is modified to Phosphoserine; by host. A BC-box-like motif motif is present at residues 144-153 (SLQYLALTAL). Residues 151–164 (TALIAPKKTKPPLP) form a multimerization region. The tract at residues 151 to 180 (TALIAPKKTKPPLPSVQKLVEDRWNKPQKT) is SOCS box-like. Positions 164–192 (PSVQKLVEDRWNKPQKTRGHRESHTMNGH) are disordered. Residue Ser-165 is modified to Phosphoserine; by host MAP4K1. Positions 171 to 172 (ED) are membrane association. Residues 183–192 (HRESHTMNGH) are compositionally biased toward basic and acidic residues. Phosphothreonine; by host is present on Thr-188.

The protein belongs to the primate lentivirus group Vif protein family. As to quaternary structure, homomultimer; in vitro and presumably in vivo. Interacts with viral RNA and Pr55Gag precursor; these interactions mediate Vif incorporation into the virion. Interacts with the viral reverse transcriptase. Forms cullin-5-RING E3 ubiquitin-protein ligase complex (ECS complex) by interacting with host CUL5, RBX2, elongin BC complex (ELOB and ELOC) and CBFB/CBF-beta. Within the ECS complex, Vif interacts directly with host CUL5, ELOC and APOBEC (APOBEC3F and APOBEC3G) substrates. The ECS complex also contains some single-stranded RNA (ssRNA) that acts as a glue that bridges Vif with APOBEC (APOBEC3F and APOBEC3G) substrates. Interacts with host UBCE7IP1 isoform 3/ZIN and possibly with SAT. Interacts with host tyrosine kinases HCK and FYN; these interactions may decrease level of phosphorylated APOBEC3G incorporation into virions. Interacts with host ABCE1; this interaction may play a role in protecting viral RNA from damage during viral assembly. Interacts with host MDM2; this interaction targets Vif for degradation by the proteasome. In terms of processing, processed in virion by the viral protease. Highly phosphorylated on serine and threonine residues. Post-translationally, polyubiquitinated and degraded by the proteasome in the presence of APOBEC3G.

It localises to the host cytoplasm. The protein resides in the host cell membrane. The protein localises to the virion. Its function is as follows. Counteracts the innate antiviral activity of host APOBEC3F and APOBEC3G by promoting their ubiquitination and degradation. Acts as a substrate recognition component of an E3 ubiquitin-protein ligase complex: mechanistically, Vif hijacks a host cullin-5-RING E3 ubiquitin-protein ligase complex (ECS complex) and the transcription coactivator CBFB/CBF-beta to form an active E3 ubiquitin-protein ligase complex that targets APOBEC3G and APOBEC3F for polyubiquitination, leading to their degradation by the proteasome. Vif interaction with APOBEC3G also blocks its cytidine deaminase activity in a proteasome-independent manner, suggesting a dual inhibitory mechanism. May interact directly with APOBEC3G mRNA in order to inhibit its translation. Association with CBFB/CBF-beta also inhibits the transcription coactivator activity of CBFB/CBF-beta. Seems to play a role in viral morphology by affecting the stability of the viral nucleoprotein core. Finally, Vif also contributes to the G2 cell cycle arrest observed in HIV infected cells. The polypeptide is Virion infectivity factor (Homo sapiens (Human)).